The primary structure comprises 260 residues: Thiazole synthase (260 aa).

K96 acts as the Schiff-base intermediate with DXP in catalysis. 1-deoxy-D-xylulose 5-phosphate-binding positions include G157, 184–185 (AG), and 206–207 (NT).

Belongs to the ThiG family. Homotetramer. Forms heterodimers with either ThiH or ThiS.

Its subcellular location is the cytoplasm. The catalysed reaction is [ThiS sulfur-carrier protein]-C-terminal-Gly-aminoethanethioate + 2-iminoacetate + 1-deoxy-D-xylulose 5-phosphate = [ThiS sulfur-carrier protein]-C-terminal Gly-Gly + 2-[(2R,5Z)-2-carboxy-4-methylthiazol-5(2H)-ylidene]ethyl phosphate + 2 H2O + H(+). The protein operates within cofactor biosynthesis; thiamine diphosphate biosynthesis. Catalyzes the rearrangement of 1-deoxy-D-xylulose 5-phosphate (DXP) to produce the thiazole phosphate moiety of thiamine. Sulfur is provided by the thiocarboxylate moiety of the carrier protein ThiS. In vitro, sulfur can be provided by H(2)S. This chain is Thiazole synthase, found in Rhodopseudomonas palustris (strain TIE-1).